The sequence spans 74 residues: MKSGIHPDYVETTVLCGCGASFTTRSTKQSGQITVEVCSQCHPFYTGKQKILDSGGRVARFEKRYGKRKTTADK.

Zn(2+)-binding residues include Cys-16, Cys-18, Cys-38, and Cys-41.

Belongs to the bacterial ribosomal protein bL31 family. Type A subfamily. In terms of assembly, part of the 50S ribosomal subunit. It depends on Zn(2+) as a cofactor.

In terms of biological role, binds the 23S rRNA. In Mycolicibacterium vanbaalenii (strain DSM 7251 / JCM 13017 / BCRC 16820 / KCTC 9966 / NRRL B-24157 / PYR-1) (Mycobacterium vanbaalenii), this protein is Large ribosomal subunit protein bL31.